A 149-amino-acid chain; its full sequence is Transcriptional repressor NrdR (149 aa).

A zinc finger spans residues 3 to 34; the sequence is CPFCSAVDTKVIDSRLVGEGSQVRRRRQCLVC. In terms of domain architecture, ATP-cone spans 49-139; the sequence is PRVIKSNEVR…VYRSFEDIRE (91 aa).

Belongs to the NrdR family. Zn(2+) is required as a cofactor.

Its function is as follows. Negatively regulates transcription of bacterial ribonucleotide reductase nrd genes and operons by binding to NrdR-boxes. The protein is Transcriptional repressor NrdR of Pectobacterium carotovorum subsp. carotovorum (strain PC1).